A 104-amino-acid chain; its full sequence is Cytochrome c-552 (104 aa).

A signal peptide spans 1 to 23; it reads MHLHLRGICLVLAVASSSSSALA. The heme c site is built by C37, C40, H41, and M82.

The protein belongs to the cytochrome c family. In terms of assembly, monoheme monomer. Has the tendency to dimerize. Post-translationally, binds 1 heme c group covalently per subunit.

Its subcellular location is the periplasm. This is Cytochrome c-552 (cycB) from Bradyrhizobium diazoefficiens (strain JCM 10833 / BCRC 13528 / IAM 13628 / NBRC 14792 / USDA 110).